A 133-amino-acid polypeptide reads, in one-letter code: Small ribosomal subunit protein bS6 (133 aa).

The span at 106–125 shows a compositional bias: basic and acidic residues; that stretch reads REERVERAPRAPRPEVKAEP. The tract at residues 106–133 is disordered; it reads REERVERAPRAPRPEVKAEPEAEATAEA.

Belongs to the bacterial ribosomal protein bS6 family.

Functionally, binds together with bS18 to 16S ribosomal RNA. The sequence is that of Small ribosomal subunit protein bS6 from Psychromonas ingrahamii (strain DSM 17664 / CCUG 51855 / 37).